The sequence spans 162 residues: NADH-quinone oxidoreductase subunit I (162 aa).

4Fe-4S ferredoxin-type domains follow at residues 52 to 82 and 93 to 122; these read LRRYPNGEERCIACKLCEAVCPAQAITIEAG and TRYDIDMVKCIYCGMCQEACPVDAIVEGPN. 8 residues coordinate [4Fe-4S] cluster: cysteine 62, cysteine 65, cysteine 68, cysteine 72, cysteine 102, cysteine 105, cysteine 108, and cysteine 112.

It belongs to the complex I 23 kDa subunit family. As to quaternary structure, NDH-1 is composed of 14 different subunits. Subunits NuoA, H, J, K, L, M, N constitute the membrane sector of the complex. [4Fe-4S] cluster is required as a cofactor.

Its subcellular location is the cell inner membrane. The enzyme catalyses a quinone + NADH + 5 H(+)(in) = a quinol + NAD(+) + 4 H(+)(out). NDH-1 shuttles electrons from NADH, via FMN and iron-sulfur (Fe-S) centers, to quinones in the respiratory chain. The immediate electron acceptor for the enzyme in this species is believed to be ubiquinone. Couples the redox reaction to proton translocation (for every two electrons transferred, four hydrogen ions are translocated across the cytoplasmic membrane), and thus conserves the redox energy in a proton gradient. The chain is NADH-quinone oxidoreductase subunit I from Methylobacterium sp. (strain 4-46).